Reading from the N-terminus, the 231-residue chain is Small ribosomal subunit protein uS3 (231 aa).

The region spanning 39 to 108 (IKNYIKKRYK…EISISVLEVK (70 aa)) is the KH type-2 domain.

This sequence belongs to the universal ribosomal protein uS3 family. Part of the 30S ribosomal subunit. Forms a tight complex with proteins S10 and S14.

Binds the lower part of the 30S subunit head. Binds mRNA in the 70S ribosome, positioning it for translation. The polypeptide is Small ribosomal subunit protein uS3 (Aquifex pyrophilus).